The following is a 132-amino-acid chain: UPF0299 membrane protein CKO_00648 (132 aa).

4 helical membrane-spanning segments follow: residues 7-27 (IIWQ…AGIF), 31-51 (LLPI…VLLA), 63-83 (GCYV…VGVM), and 93-113 (FGPV…VVSW).

The protein belongs to the UPF0299 family.

It is found in the cell inner membrane. The sequence is that of UPF0299 membrane protein CKO_00648 from Citrobacter koseri (strain ATCC BAA-895 / CDC 4225-83 / SGSC4696).